A 939-amino-acid chain; its full sequence is Dynamin-like GTPase MGM1, mitochondrial (939 aa).

A mitochondrion-targeting transit peptide spans 1 to 27 (MSAQLRAAAAITPAARRVISGPAAVRR). A helical transmembrane segment spans residues 85-103 (FIRVPALFGGMMLGAVGWV). A compositionally biased stretch (gly residues) spans 170–183 (AGEGSGSGEGGPNG). The disordered stretch occupies residues 170 to 196 (AGEGSGSGEGGPNGGPEPPRQSRAGAA). One can recognise a Dynamin-type G domain in the interval 249 to 522 (TVTLPSIVVI…LEQQMSSKLN (274 aa)). Residues 259–266 (GSQSSGKS) are G1 motif. GTP is bound by residues Ser262, Gly264, Lys265, Ser266, Ser267, and Gly281. Residue Ser266 coordinates Mg(2+). The G2 motif stretch occupies residues 285–287 (ITR). Mg(2+) is bound by residues Thr286 and Asp359. The G3 motif stretch occupies residues 359–362 (DLPG). The tract at residues 427–430 (TKMD) is G4 motif. The GTP site is built by Lys428, Asp430, and Ser457. The segment at 456–459 (ISKL) is G5 motif. The segment at 549–703 (SAESYLAASL…TSDGIEISLK (155 aa)) is stalk region. Positions 710-809 (DIQPNEWAQG…LSLRIQAAKS (100 aa)) are paddle region. Residues 810 to 877 (RQCKTLTNKY…GGGLEKFARE (68 aa)) form a stalk region region. Cysteines 812 and 821 form a disulfide. Positions 815-909 (LTNKYYCPEV…KIEELHRISS (95 aa)) constitute a GED domain.

This sequence belongs to the TRAFAC class dynamin-like GTPase superfamily. Dynamin/Fzo/YdjA family. In terms of assembly, oligomeric complex consisting of membrane-bound and soluble forms of MGM1. Cleavage of the transit peptide by mitochondrial processing protease (MPP) produces a long integral membrane form of MGM1 (L-MGM1). Further processing by the rhomboid protease PCP1 produces a short peripheral membrane form of MGM1 (S-MGM1). Both forms are required for full activity.

The protein resides in the mitochondrion inner membrane. The protein localises to the mitochondrion intermembrane space. It catalyses the reaction GTP + H2O = GDP + phosphate + H(+). Its function is as follows. Dynamin-related GTPase that is essential for normal mitochondrial morphology by mediating fusion of the mitochondrial inner membranes, regulating cristae morphology and maintaining respiratory chain function. Exists in two forms: the transmembrane, long form (Dynamin-like GTPase MGM1, long form; L-MGM1), which is tethered to the inner mitochondrial membrane, and the short soluble form (Dynamin-like GTPase MGM1, short form; S-MGM1), which results from proteolytic cleavage and localizes in the intermembrane space. Both forms (L-MGM1 and S-MGM1) cooperate to catalyze the fusion of the mitochondrial inner membrane. The equilibrium between L-MGM1 and S-MGM1 is essential: excess levels of S-MGM1, following loss of mitochondrial membrane potential, lead to an impaired equilibrium between L-MGM1 and S-MGM1, inhibiting mitochondrial fusion. Plays a role in the maintenance and remodeling of mitochondrial cristae, some invaginations of the mitochondrial inner membrane that provide an increase in the surface area. Probably acts by forming helical filaments at the inside of inner membrane tubes with the shape and dimensions of crista junctions. Functionally, constitutes the transmembrane long form (L-MGM1) that plays a central role in mitochondrial inner membrane fusion and cristae morphology. L-MGM1 and the soluble short form (S-MGM1) form higher-order helical assemblies that coordinate the fusion of mitochondrial inner membranes. Inner membrane-anchored L-MGM1 molecules initiate membrane remodeling by recruiting soluble S-MGM1 to rapidly polymerize into a flexible cylindrical scaffold encaging the mitochondrial inner membrane. Once at the membrane surface, the formation of S-MGM1 helices induce bilayer curvature. MGM1 dimerization through the paddle region, which inserts into cardiolipin-containing membrane, promotes GTP hydrolysis and the helical assembly of a flexible MGM1 lattice on the membrane, which drives membrane curvature and mitochondrial fusion. In terms of biological role, constitutes the soluble short form (S-MGM1) generated by cleavage by PCP1, which plays a central role in mitochondrial inner membrane fusion and cristae morphology. The transmembrane long form (L-MGM1) and the S-MGM1 form higher-order helical assemblies that coordinate the fusion of mitochondrial inner membranes. Inner membrane-anchored L-MGM1 molecules initiate membrane remodeling by recruiting soluble S-MGM1 to rapidly polymerize into a flexible cylindrical scaffold encaging the mitochondrial inner membrane. Once at the membrane surface, the formation of S-MGM1 helices induce bilayer curvature. MGM1 dimerization through the paddle region, which inserts into cardiolipin-containing membrane, promotes GTP hydrolysis and the helical assembly of a flexible MGM1 lattice on the membrane, which drives membrane curvature and mitochondrial fusion. Excess levels of S-MGM1 produced by cleavage by PCP1 following stress conditions that induce loss of mitochondrial membrane potential, lead to an impaired equilibrium between L-MGM1 and S-MGM1, thereby inhibiting mitochondrial fusion. This Chaetomium thermophilum (strain DSM 1495 / CBS 144.50 / IMI 039719) (Thermochaetoides thermophila) protein is Dynamin-like GTPase MGM1, mitochondrial.